The following is a 633-amino-acid chain: Chaperone protein DnaK (633 aa).

Phosphothreonine; by autocatalysis is present on Thr198.

It belongs to the heat shock protein 70 family.

Its function is as follows. Acts as a chaperone. This is Chaperone protein DnaK from Rhodopseudomonas palustris (strain BisA53).